The following is a 215-amino-acid chain: Fanconi anemia core complex-associated protein 24 (215 aa).

Belongs to the multisubunit FA complex composed of FANCA, FANCB, FANCC, FANCE, FANCF, FANCG, FANCL/PHF9, FANCM and FAAP24. Interacts with FANCM.

The protein localises to the nucleus. Functionally, plays a role in DNA repair through recruitment of the FA core complex to damaged DNA. Regulates FANCD2 monoubiquitination upon DNA damage. Induces chromosomal instability as well as hypersensitivity to DNA cross-linking agents, when repressed. Targets FANCM/FAAP24 complex to the DNA, preferentially to single strand DNA. The chain is Fanconi anemia core complex-associated protein 24 from Bos taurus (Bovine).